The following is a 278-amino-acid chain: Small ribosomal subunit protein uS5 (278 aa).

The disordered stretch occupies residues 1 to 43 (MADAPAPAGGRGGFRGGFGGRGRGRGRGRGRGRGRGRGAKDGD). The span at 9 to 21 (GGRGGFRGGFGGR) shows a compositional bias: gly residues. Residues 22–37 (GRGRGRGRGRGRGRGR) are compositionally biased toward basic residues. The S5 DRBM domain maps to 88–151 (LKDEVLKIMP…ILAKLSVVPV (64 aa)).

This sequence belongs to the universal ribosomal protein uS5 family.

In terms of biological role, component of the ribosome, a large ribonucleoprotein complex responsible for the synthesis of proteins in the cell. The small ribosomal subunit (SSU) binds messenger RNAs (mRNAs) and translates the encoded message by selecting cognate aminoacyl-transfer RNA (tRNA) molecules. The large subunit (LSU) contains the ribosomal catalytic site termed the peptidyl transferase center (PTC), which catalyzes the formation of peptide bonds, thereby polymerizing the amino acids delivered by tRNAs into a polypeptide chain. The nascent polypeptides leave the ribosome through a tunnel in the LSU and interact with protein factors that function in enzymatic processing, targeting, and the membrane insertion of nascent chains at the exit of the ribosomal tunnel. Plays a role in the assembly and function of the 40S ribosomal subunit. Mutations in this protein affects the control of translational fidelity. Involved in nucleolar processing of pre-18S ribosomal RNA and ribosome assembly. The polypeptide is Small ribosomal subunit protein uS5 (RPS2) (Urechis caupo (Innkeeper worm)).